The sequence spans 363 residues: UDP-N-acetylglucosamine--N-acetylmuramyl-(pentapeptide) pyrophosphoryl-undecaprenol N-acetylglucosamine transferase (363 aa).

UDP-N-acetyl-alpha-D-glucosamine contacts are provided by residues 14–16 (TGG), asparagine 122, arginine 163, serine 190, and glutamine 285.

The protein belongs to the glycosyltransferase 28 family. MurG subfamily.

It is found in the cell inner membrane. The catalysed reaction is di-trans,octa-cis-undecaprenyl diphospho-N-acetyl-alpha-D-muramoyl-L-alanyl-D-glutamyl-meso-2,6-diaminopimeloyl-D-alanyl-D-alanine + UDP-N-acetyl-alpha-D-glucosamine = di-trans,octa-cis-undecaprenyl diphospho-[N-acetyl-alpha-D-glucosaminyl-(1-&gt;4)]-N-acetyl-alpha-D-muramoyl-L-alanyl-D-glutamyl-meso-2,6-diaminopimeloyl-D-alanyl-D-alanine + UDP + H(+). It participates in cell wall biogenesis; peptidoglycan biosynthesis. Its function is as follows. Cell wall formation. Catalyzes the transfer of a GlcNAc subunit on undecaprenyl-pyrophosphoryl-MurNAc-pentapeptide (lipid intermediate I) to form undecaprenyl-pyrophosphoryl-MurNAc-(pentapeptide)GlcNAc (lipid intermediate II). The chain is UDP-N-acetylglucosamine--N-acetylmuramyl-(pentapeptide) pyrophosphoryl-undecaprenol N-acetylglucosamine transferase from Prochlorococcus marinus (strain AS9601).